The chain runs to 569 residues: Urease subunit alpha (569 aa).

In terms of domain architecture, Urease spans 131–569 (GSIDTHIHFI…VPMAQRYFLL (439 aa)). Ni(2+) is bound by residues His136, His138, and Lys219. Residue Lys219 is modified to N6-carboxylysine. His221 lines the substrate pocket. His248 and His274 together coordinate Ni(2+). The Proton donor role is filled by His322. Residue Asp362 coordinates Ni(2+).

The protein belongs to the metallo-dependent hydrolases superfamily. Urease alpha subunit family. In terms of assembly, heterotrimer of UreA (gamma), UreB (beta) and UreC (alpha) subunits. Three heterotrimers associate to form the active enzyme. Requires Ni cation as cofactor. Carboxylation allows a single lysine to coordinate two nickel ions.

The protein resides in the cytoplasm. It catalyses the reaction urea + 2 H2O + H(+) = hydrogencarbonate + 2 NH4(+). The protein operates within nitrogen metabolism; urea degradation; CO(2) and NH(3) from urea (urease route): step 1/1. The polypeptide is Urease subunit alpha (Prochlorococcus marinus (strain MIT 9215)).